The chain runs to 298 residues: Mimecan (298 aa).

An N-terminal signal peptide occupies residues 1–20 (MKTLQSTLLLLLLVPLIKPA). An O-linked (GalNAc...) threonine glycan is attached at threonine 80. N-linked (GlcNAc...) (keratan sulfate) asparagine glycosylation occurs at asparagine 88. 7 LRR repeats span residues 112–131 (DAVP…FNKI), 132–155 (KKLT…GNLI), 156–179 (EDIE…ENQL), 180–199 (LKLP…YNKI), 200–225 (KSRG…HNAL), 226–246 (ESVP…FNNI), and 247–277 (ASIT…GNPI). Asparagine 214 carries N-linked (GlcNAc...) (keratan sulfate) asparagine glycosylation. Residues cysteine 255 and cysteine 288 are joined by a disulfide bond. N-linked (GlcNAc...) (keratan sulfate) asparagine glycosylation is present at asparagine 258.

This sequence belongs to the small leucine-rich proteoglycan (SLRP) family. SLRP class III subfamily. O-glycosylated with a core 1 or possibly core 8 glycan. In terms of processing, contains keratan sulfate. As to expression, bone.

The protein resides in the secreted. Its subcellular location is the extracellular space. It localises to the extracellular matrix. Its function is as follows. Induces bone formation in conjunction with TGF-beta-1 or TGF-beta-2. The polypeptide is Mimecan (OGN) (Homo sapiens (Human)).